The chain runs to 469 residues: Mannosyl-oligosaccharide 1,2-alpha-mannosidase IA (469 aa).

Residues 1–469 (REPADAAVRE…DQKEVEVKVK (469 aa)) lie on the Lumenal side of the membrane. Cys-292 and Cys-324 form a disulfide bridge. Asn-329 carries N-linked (GlcNAc...) asparagine glycosylation. Glu-338 (proton donor) is an active-site residue. Thr-449 provides a ligand contact to Ca(2+).

The protein belongs to the glycosyl hydrolase 47 family. It depends on Ca(2+) as a cofactor.

Its subcellular location is the golgi apparatus membrane. The enzyme catalyses N(4)-(alpha-D-Man-(1-&gt;2)-alpha-D-Man-(1-&gt;2)-alpha-D-Man-(1-&gt;3)-[alpha-D-Man-(1-&gt;2)-alpha-D-Man-(1-&gt;3)-[alpha-D-Man-(1-&gt;2)-alpha-D-Man-(1-&gt;6)]-alpha-D-Man-(1-&gt;6)]-beta-D-Man-(1-&gt;4)-beta-D-GlcNAc-(1-&gt;4)-beta-D-GlcNAc)-L-asparaginyl-[protein] (N-glucan mannose isomer 9A1,2,3B1,2,3) + 4 H2O = N(4)-(alpha-D-Man-(1-&gt;3)-[alpha-D-Man-(1-&gt;3)-[alpha-D-Man-(1-&gt;6)]-alpha-D-Man-(1-&gt;6)]-beta-D-Man-(1-&gt;4)-beta-D-GlcNAc-(1-&gt;4)-beta-D-GlcNAc)-L-asparaginyl-[protein] (N-glucan mannose isomer 5A1,2) + 4 beta-D-mannose. It catalyses the reaction N(4)-(alpha-D-Man-(1-&gt;2)-alpha-D-Man-(1-&gt;2)-alpha-D-Man-(1-&gt;3)-[alpha-D-Man-(1-&gt;3)-[alpha-D-Man-(1-&gt;2)-alpha-D-Man-(1-&gt;6)]-alpha-D-Man-(1-&gt;6)]-beta-D-Man-(1-&gt;4)-beta-D-GlcNAc-(1-&gt;4)-beta-D-GlcNAc)-L-asparaginyl-[protein] (N-glucan mannose isomer 8A1,2,3B1,3) + 3 H2O = N(4)-(alpha-D-Man-(1-&gt;3)-[alpha-D-Man-(1-&gt;3)-[alpha-D-Man-(1-&gt;6)]-alpha-D-Man-(1-&gt;6)]-beta-D-Man-(1-&gt;4)-beta-D-GlcNAc-(1-&gt;4)-beta-D-GlcNAc)-L-asparaginyl-[protein] (N-glucan mannose isomer 5A1,2) + 3 beta-D-mannose. It functions in the pathway protein modification; protein glycosylation. Inhibited by both 1-deoxymannojirimycin and kifunensine. Involved in the maturation of Asn-linked oligosaccharides. Progressively trim alpha-1,2-linked mannose residues from Man(9)GlcNAc(2) to produce Man(5)GlcNAc(2). The protein is Mannosyl-oligosaccharide 1,2-alpha-mannosidase IA (MAN1A1) of Oryctolagus cuniculus (Rabbit).